We begin with the raw amino-acid sequence, 460 residues long: Armadillo repeat-containing protein LFR (460 aa).

The segment covering 1–10 (MSHVRSAPAG) has biased composition (low complexity). Positions 1–32 (MSHVRSAPAGKSGGGGGSTPAKRGRPFGSTTG) are disordered. ARM repeat units follow at residues 225-267 (ENET…NLAP), 321-360 (NEPFLLPAIPQIYKRLVDLLSVPAVDAQAAAISALYNVAE), and 364-405 (DFRL…SLVS).

Interacts with CHR719, SWI3A and SWI3C. Expressed at low levels in coleoptiles, leaf tongues, mature leaves and nodes during the vegetative phase. Highly expressed in reproductive tissues such as young panicles, early developing seeds, embryos and endosperms.

The protein localises to the nucleus. Plays critical roles in both embryo and endosperm development. Required for free nuclei division and cellularization in early endosperm development, by preventing premature cell death in the endosperm. Involved in the regulation of pattern formation and organ differentiation during embryogenesis, by regulating genes involved in the early stages of seed development. The sequence is that of Armadillo repeat-containing protein LFR from Oryza sativa subsp. japonica (Rice).